Reading from the N-terminus, the 67-residue chain is Beta-defensin 1 (67 aa).

A signal peptide spans 1–22 (MRIHYLLFAVLFLFLMPVPGEG). Intrachain disulfides connect Cys-33/Cys-62, Cys-40/Cys-55, and Cys-45/Cys-63.

In terms of assembly, monomer. Homodimer. As to expression, highly expressed in tongue, nasopharyngeal mucosa and skin, and to a lower extent in the Eustachian tube, lung and trachea.

It localises to the secreted. It is found in the membrane. Functionally, has antibacterial activity against Gram-positive bacterium S.pneumoniae Serotype 14. Is also active against Gram-negative bacteria M.catarrhalis 1857, and non-typeable H.influenzae strains 86-028NP and 1128. Has antifungal activity against C.albicans. May have a role in maintaining sterility in the middle ear. May act as a ligand for C-C chemokine receptor CCR6. Positively regulates the sperm motility and bactericidal activity in a CCR6-dependent manner. Binds to CCR6 and triggers Ca2+ mobilization in the sperm which is important for its motility. This Chinchilla lanigera (Long-tailed chinchilla) protein is Beta-defensin 1 (DEFB1).